Reading from the N-terminus, the 215-residue chain is Cytidylate kinase (215 aa).

An ATP-binding site is contributed by 10–18; the sequence is GPAAAGKST.

Belongs to the cytidylate kinase family. Type 1 subfamily.

The protein localises to the cytoplasm. The enzyme catalyses CMP + ATP = CDP + ADP. It catalyses the reaction dCMP + ATP = dCDP + ADP. This Staphylococcus epidermidis (strain ATCC 35984 / DSM 28319 / BCRC 17069 / CCUG 31568 / BM 3577 / RP62A) protein is Cytidylate kinase.